The following is a 208-amino-acid chain: Troponin I, cardiac muscle (208 aa).

Disordered stretches follow at residues 1-37 (MAEE…KISA), 54-74 (DLER…GELC), and 168-208 (VRKD…GGQS). At alanine 2 the chain carries N-acetylalanine. The interval 28–73 (HAKRQSKISASRKLQLKTLLLQRAKRDLEREEQERAGEKQRHLGEL) is involved in binding TNC. Composition is skewed to basic and acidic residues over residues 54-71 (DLER…RHLG) and 168-187 (VRKD…RKNV).

It belongs to the troponin I family. As to quaternary structure, binds to actin and tropomyosin.

Troponin I is the inhibitory subunit of troponin, the thin filament regulatory complex which confers calcium-sensitivity to striated muscle actomyosin ATPase activity. This chain is Troponin I, cardiac muscle (TNNI3), found in Coturnix japonica (Japanese quail).